The chain runs to 356 residues: MGIEVKNLVKRFGNFTAIDDLSLDVPSGELVALLGPSGSGKTTLLRIIAGLEDADKGQVIFEGREVGKKNAKDRGVGFVFQHYALFRHMTIFENIAFGLEVRKRSERPSKDTIRDKVMSLLKLVQLENFYNRYPSELSGGQRQRIALARALAIEPRFLLLDEPFGALDAKVRKELRNWLRRLHDEIHITSVFVTHDQEEALEVSDKVVILRSGKIEQVGTPDEVYNHPKNSFVFHFLGDVNLFHGRVQGGQTQLGEIKVDTPEHSEIENASAVGYVRPYDVEILREPIEAQTIPAEIQYIHSTGRNVKIDLKRLDTGTILESQLNSSEFQSLNLLPGETVHIRFKKIKVYVEDYTI.

Residues 3–237 (IEVKNLVKRF…PKNSFVFHFL (235 aa)) enclose the ABC transporter domain. Residue 35 to 42 (GPSGSGKT) participates in ATP binding.

Belongs to the ABC transporter superfamily. Sulfate/tungstate importer (TC 3.A.1.6) family. As to quaternary structure, the complex is composed of two ATP-binding proteins (CysA), two transmembrane proteins (CysT and CysW) and a solute-binding protein (CysP).

Its subcellular location is the cell inner membrane. It catalyses the reaction sulfate(out) + ATP + H2O = sulfate(in) + ADP + phosphate + H(+). It carries out the reaction thiosulfate(out) + ATP + H2O = thiosulfate(in) + ADP + phosphate + H(+). Functionally, part of the ABC transporter complex CysAWTP involved in sulfate/thiosulfate import. Responsible for energy coupling to the transport system. This chain is Sulfate/thiosulfate import ATP-binding protein CysA, found in Leptospira interrogans serogroup Icterohaemorrhagiae serovar copenhageni (strain Fiocruz L1-130).